A 396-amino-acid polypeptide reads, in one-letter code: Elongation factor Tu (396 aa).

A tr-type G domain is found at 10–206 (KPHVNVGTIG…ALDTYIPTPE (197 aa)). Residues 19–26 (GHVDHGKT) form a G1 region. GTP is bound at residue 19–26 (GHVDHGKT). Position 26 (Thr-26) interacts with Mg(2+). The G2 stretch occupies residues 60-64 (GITIN). The G3 stretch occupies residues 81 to 84 (DCPG). GTP-binding positions include 81–85 (DCPGH) and 136–139 (NKCD). A G4 region spans residues 136–139 (NKCD). The segment at 174 to 176 (SAK) is G5.

This sequence belongs to the TRAFAC class translation factor GTPase superfamily. Classic translation factor GTPase family. EF-Tu/EF-1A subfamily. In terms of assembly, monomer.

Its subcellular location is the cytoplasm. The enzyme catalyses GTP + H2O = GDP + phosphate + H(+). Functionally, GTP hydrolase that promotes the GTP-dependent binding of aminoacyl-tRNA to the A-site of ribosomes during protein biosynthesis. The protein is Elongation factor Tu of Burkholderia cenocepacia (strain HI2424).